Consider the following 83-residue polypeptide: Three-finger toxin MALT0052C (83 aa).

A signal peptide spans 1 to 21; that stretch reads MKTLLLTLVVVTIVCLDFGHT. Intrachain disulfides connect C24/C45, C38/C62, C64/C75, and C76/C81.

This sequence belongs to the three-finger toxin family. Short-chain subfamily. Type I alpha-neurotoxin sub-subfamily. In terms of tissue distribution, expressed by the venom gland.

It is found in the secreted. In terms of biological role, binds to muscle nicotinic acetylcholine receptor (nAChR) and inhibit acetylcholine from binding to the receptor, thereby impairing neuromuscular transmission. The sequence is that of Three-finger toxin MALT0052C from Micrurus altirostris (Uruguayan coral snake).